The sequence spans 304 residues: MRLPIFLDTDPGIDDAVAIAAAIFAPELDLQLMTTVAGNVSVEKTTRNALQLLHFWNVDIPLAQGAAVPLVRAPRDAASVHGESGMAGYDFVEHNRQPLGIPAFLAIRDALMRAPEPVTLVAIGPLTNIALLLSQCPECKPYIRRLVIMGGSAGRGNCTPNAEFNIAADPEAAACVFRSGIEIVMCGLDVTNQAILTPDYLATLPELNRTGKMLHALFSHYRSGSMQSGLRMHDLCAIAWLVRPELFTLKPCFVAVETQGEFTSGTTVVDIDGCLGKPANVQVALDLDVKGFQQWVAEVLALAL.

Histidine 233 is an active-site residue.

It belongs to the IUNH family. RihC subfamily.

Its function is as follows. Hydrolyzes both purine and pyrimidine ribonucleosides with a broad-substrate specificity. The chain is Non-specific ribonucleoside hydrolase RihC from Escherichia coli O45:K1 (strain S88 / ExPEC).